The chain runs to 307 residues: Alginate lyase (307 aa).

The signal sequence occupies residues 1–20 (MLKSGVMVASLCLFSVPSRA).

This sequence belongs to the polysaccharide lyase 7 family.

It is found in the secreted. It carries out the reaction Eliminative cleavage of alginate to give oligosaccharides with 4-deoxy-alpha-L-erythro-hex-4-enuronosyl groups at their non-reducing ends and beta-D-mannuronate at their reducing end.. In terms of biological role, degrades alginates that contain guluronic acid. The chain is Alginate lyase (alyA) from Klebsiella pneumoniae.